The sequence spans 82 residues: Host translation inhibitor 5b (82 aa).

Functionally, involved in host translation shutoff without degradating host RNA. By suppressing host gene expression, facilitates the evasion from host type I interferon immune response. The chain is Host translation inhibitor 5b from Avian infectious bronchitis virus (strain KB8523) (IBV).